We begin with the raw amino-acid sequence, 482 residues long: Cytochrome P450 monooxygenase pynD (482 aa).

A signal peptide spans 1–22 (MWRIPVIVALVAGLLYWVRKQG). N-linked (GlcNAc...) asparagine glycosylation is present at Asn-401. Residue Cys-417 participates in heme binding.

Belongs to the cytochrome P450 family. The cofactor is heme.

Its pathway is secondary metabolite biosynthesis. In terms of biological role, cytochrome P450 monooxygenase; part of the gene cluster that mediates the biosynthesis of pyranonigrins, a family of antioxidative compounds. The first step of pyranonigrins biosynthesis is performed by the hybrid PKS-NRPS synthetase that condenses 6 malonyl-CoA units to an acetyl starter unit, to form a 1,3,5-trioxotetradecane-6,8-dienyl-ACP. The enoyl reductase (ER) domain of pynA is likely to be functional during the first two rounds of polyketide chain extension, to generate the saturated C-C bonds of the alkyl side chain. PynA subsequently forms the amide bond between the acyl chain and L-serine. Although pynA has a terminal reductase domain, it appears to require the thioesterase pynI for the release of the straight-chain intermediate from pynA via the formation of a tetramic acid pyranonigrin J. The methyltransferase pynC then coverts pyranonigrin J to pyranonigrin I via N-methylation. The FAD-dependent monooxygenase pynG catalyzes an epoxidation-mediated cyclization to form the dihydro-gamma-pyrone moiety, followed by pynD-catalyzed oxidation of the alcohol to the ketone and enolization to yield the characteristic tetramic acid-fused gamma-pyrone core of pyranonigrin H. Pyranonigrin H is substrate of pynH for dehydration-mediated exo-methylene formation from the serine side chain to produce pyranonigrin E, before the oxidase pynE reduces the exo-methylene of pyranonigrin E into a pendant methyl to form pyranonigrin G. The FAD-linked oxidoreductase pynB performs the reverse reaction and converts pyranonigrin G back to pyranonigrin E. The sequence is that of Cytochrome P450 monooxygenase pynD from Aspergillus niger (strain ATCC MYA-4892 / CBS 513.88 / FGSC A1513).